The chain runs to 237 residues: UPF0280 protein Mpal_1292 (237 aa).

The protein belongs to the UPF0280 family.

In Methanosphaerula palustris (strain ATCC BAA-1556 / DSM 19958 / E1-9c), this protein is UPF0280 protein Mpal_1292.